Here is a 239-residue protein sequence, read N- to C-terminus: Glycerol-3-phosphate acyltransferase (239 aa).

Helical transmembrane passes span 6–26 (AIALLIVFSLVIGYLMGSVMF), 61–81 (FLVGLCDALKGFLAFVFSFLI), 99–119 (YYLTYLSCFAATIGHIFPLYF), 135–155 (LAISLWWFVICLVLWLLVTLI), 159–179 (VSLASLVTFFILAIIILVPWL), and 199–219 (WYIILFFVLWYWPLTIAVFWL).

This sequence belongs to the PlsY family. Probably interacts with PlsX.

It localises to the cell membrane. The catalysed reaction is an acyl phosphate + sn-glycerol 3-phosphate = a 1-acyl-sn-glycero-3-phosphate + phosphate. Its pathway is lipid metabolism; phospholipid metabolism. Functionally, catalyzes the transfer of an acyl group from acyl-phosphate (acyl-PO(4)) to glycerol-3-phosphate (G3P) to form lysophosphatidic acid (LPA). This enzyme utilizes acyl-phosphate as fatty acyl donor, but not acyl-CoA or acyl-ACP. This Mycoplasma pneumoniae (strain ATCC 29342 / M129 / Subtype 1) (Mycoplasmoides pneumoniae) protein is Glycerol-3-phosphate acyltransferase.